A 502-amino-acid chain; its full sequence is ATP synthase subunit alpha (502 aa).

169 to 176 (GDRQTGKT) contacts ATP.

Belongs to the ATPase alpha/beta chains family. In terms of assembly, F-type ATPases have 2 components, CF(1) - the catalytic core - and CF(0) - the membrane proton channel. CF(1) has five subunits: alpha(3), beta(3), gamma(1), delta(1), epsilon(1). CF(0) has three main subunits: a(1), b(2) and c(9-12). The alpha and beta chains form an alternating ring which encloses part of the gamma chain. CF(1) is attached to CF(0) by a central stalk formed by the gamma and epsilon chains, while a peripheral stalk is formed by the delta and b chains.

It localises to the cell membrane. The enzyme catalyses ATP + H2O + 4 H(+)(in) = ADP + phosphate + 5 H(+)(out). Its function is as follows. Produces ATP from ADP in the presence of a proton gradient across the membrane. The alpha chain is a regulatory subunit. The polypeptide is ATP synthase subunit alpha (Bacillus sp. (strain PS3)).